The sequence spans 206 residues: Twist-related protein 1 (206 aa).

Low complexity predominate over residues 1–18 (MMQDVSSSPVSPADDSLS). The disordered stretch occupies residues 1–109 (MMQDVSSSPV…GGGSPQSYEE (109 aa)). The span at 34-43 (RGARKRRSSR) shows a compositional bias: basic residues. 2 stretches are compositionally biased toward gly residues: residues 48-65 (GSAGPGGATGGGIGGGDE) and 78-103 (SAGGGGGGGAGGGGGGGGGSSSGGGS). The bHLH domain maps to 112 to 163 (TQRVMANVRERQRTQSLNEAFAALRKIIPTLPSDKLSKIQTLKLAARYIDFL). A sufficient for transactivation activity region spans residues 165–195 (QVLQSDELDSKMASCSYVAHERLSYAFSVWR).

As to quaternary structure, efficient DNA binding requires dimerization with another bHLH protein. Homodimer or heterodimer with E proteins such as TCF3. ID1 binds preferentially to TCF3 but does not interact efficiently with TWIST1 so ID1 levels control the amount of TCF3 available to dimerize with TWIST1 and thus determine the type of dimer formed. Subset of mesodermal cells.

It localises to the nucleus. In terms of biological role, acts as a transcriptional regulator. Inhibits myogenesis by sequestrating E proteins, inhibiting trans-activation by MEF2, and inhibiting DNA-binding by MYOD1 through physical interaction. This interaction probably involves the basic domains of both proteins. Also represses expression of pro-inflammatory cytokines such as TNFA and IL1B. Regulates cranial suture patterning and fusion. Activates transcription as a heterodimer with E proteins. Regulates gene expression differentially, depending on dimer composition. Homodimers induce expression of FGFR2 and POSTN while heterodimers repress FGFR2 and POSTN expression and induce THBS1 expression. Heterodimerization is also required for osteoblast differentiation. Represses the activity of the circadian transcriptional activator: NPAS2-BMAL1 heterodimer. This Mus musculus (Mouse) protein is Twist-related protein 1 (Twist1).